The sequence spans 122 residues: Autophagy-related protein 8b (122 aa).

The Phosphatidylethanolamine amidated glycine moiety is linked to residue G117. Positions 118 to 122 (GSFYC) are cleaved as a propeptide — removed in mature form.

Belongs to the ATG8 family. As to quaternary structure, interacts with ATG4. Interacts with NBR1. In terms of processing, the C-terminal 5 residues are removed by ATG4 to expose Gly-117 at the C-terminus. This Gly-117 forms then a thioester bond with the 'Cys-558' of ATG7 (E1-like activating enzyme) before being transferred to the 'Cys-258' of ATG3 (the specific E2 conjugating enzyme), in order to be finally amidated with phosphatidylethanolamine. This lipid modification anchors ATG8 to autophagosomes. Constitutively expressed.

The protein resides in the cytoplasmic vesicle. The protein localises to the autophagosome membrane. Its subcellular location is the vacuole membrane. It localises to the cytoplasm. It is found in the cytoskeleton. Its function is as follows. Ubiquitin-like modifier involved in autophagosomes formation. May mediate the delivery of the autophagosomes to the vacuole via the microtubule cytoskeleton. The protein is Autophagy-related protein 8b (ATG8B) of Arabidopsis thaliana (Mouse-ear cress).